Consider the following 150-residue polypeptide: UPF0506 protein SJCHGC03144 (150 aa).

Residues 1–18 (MNTCIQLLILCLVTVINS) form the signal peptide. Residues Asn20, Asn36, Asn52, and Asn110 are each glycosylated (N-linked (GlcNAc...) asparagine). 3 disulfides stabilise this stretch: Cys116-Cys130, Cys123-Cys134, and Cys129-Cys139.

The protein belongs to the UPF0506 family.

The protein localises to the secreted. The polypeptide is UPF0506 protein SJCHGC03144 (Schistosoma japonicum (Blood fluke)).